Reading from the N-terminus, the 277-residue chain is Glutamate racemase (277 aa).

Substrate contacts are provided by residues 13–14 (DS) and 45–46 (YG). C76 (proton donor/acceptor) is an active-site residue. 77–78 (NT) is a binding site for substrate. Catalysis depends on C186, which acts as the Proton donor/acceptor. Residue 187–188 (TH) participates in substrate binding.

It belongs to the aspartate/glutamate racemases family.

The catalysed reaction is L-glutamate = D-glutamate. The protein operates within cell wall biogenesis; peptidoglycan biosynthesis. Provides the (R)-glutamate required for cell wall biosynthesis. The protein is Glutamate racemase of Ralstonia nicotianae (strain ATCC BAA-1114 / GMI1000) (Ralstonia solanacearum).